Consider the following 220-residue polypeptide: Aspartic protease inhibitor 2 (220 aa).

A signal peptide spans 1 to 23; the sequence is MMKCLFLLCLCLLPIVVFSSTFT. The propeptide occupies 24–32; that stretch reads SQNLIDLPS. Residues 26–31 carry the Vacuolar targeting signal motif; sequence NLIDLP. N-linked (GlcNAc...) asparagine glycosylation is present at asparagine 51. 2 cysteine pairs are disulfide-bonded: cysteine 80/cysteine 125 and cysteine 174/cysteine 185.

Belongs to the protease inhibitor I3 (leguminous Kunitz-type inhibitor) family. Tubers.

It localises to the vacuole. Functionally, inhibitor of cathepsin D (aspartic protease). May also inhibit trypsin and chymotrypsin (serine proteases). Protects the plant by inhibiting proteases of invading organisms. This chain is Aspartic protease inhibitor 2, found in Solanum tuberosum (Potato).